Consider the following 40-residue polypeptide: Photosystem II reaction center protein J (40 aa).

A helical transmembrane segment spans residues 8–28 (IPLWLIGTVTGIPVIGSMGIF).

Belongs to the PsbJ family. As to quaternary structure, PSII is composed of 1 copy each of membrane proteins PsbA, PsbB, PsbC, PsbD, PsbE, PsbF, PsbH, PsbI, PsbJ, PsbK, PsbL, PsbM, PsbT, PsbX, PsbY, PsbZ, Psb30/Ycf12, at least 3 peripheral proteins of the oxygen-evolving complex and a large number of cofactors. It forms dimeric complexes.

The protein resides in the plastid. It localises to the chloroplast thylakoid membrane. One of the components of the core complex of photosystem II (PSII). PSII is a light-driven water:plastoquinone oxidoreductase that uses light energy to abstract electrons from H(2)O, generating O(2) and a proton gradient subsequently used for ATP formation. It consists of a core antenna complex that captures photons, and an electron transfer chain that converts photonic excitation into a charge separation. In Illicium oligandrum (Star anise), this protein is Photosystem II reaction center protein J.